The chain runs to 281 residues: Imidazoleglycerol-phosphate dehydratase, chloroplastic (281 aa).

Residues 1-85 (MELYAASHSL…TSLPFHPETR (85 aa)) constitute a chloroplast transit peptide. Substrate is bound by residues glutamate 95, 121 to 129 (HMLDQLASH), 147 to 151 (HHTNE), arginine 173, and arginine 195. Residues histidine 121, histidine 147, histidine 148, and glutamate 151 each coordinate Mn(2+). Histidine 219, histidine 243, histidine 244, and glutamate 247 together coordinate Mn(2+). Residues 243–251 (HHIIEATFK) and 273–275 (SSK) each bind substrate.

The protein belongs to the imidazoleglycerol-phosphate dehydratase family. It depends on Mn(2+) as a cofactor.

The protein resides in the plastid. Its subcellular location is the chloroplast. It carries out the reaction D-erythro-1-(imidazol-4-yl)glycerol 3-phosphate = 3-(imidazol-4-yl)-2-oxopropyl phosphate + H2O. Its pathway is amino-acid biosynthesis; L-histidine biosynthesis; L-histidine from 5-phospho-alpha-D-ribose 1-diphosphate: step 6/9. The polypeptide is Imidazoleglycerol-phosphate dehydratase, chloroplastic (Pisum sativum (Garden pea)).